The following is a 1067-amino-acid chain: Dorsal-ventral patterning protein tolloid (1067 aa).

The signal sequence occupies residues 1–36 (MKGMRLMPMKMKAKLVVLSVGALWMMMFFLVDYAEG). A propeptide spanning residues 37–136 (RRLSQLPESE…NGQPIQRRRR (100 aa)) is cleaved from the precursor. The 203-residue stretch at 136–338 (RAVTVRKERT…VQANLLYKCA (203 aa)) folds into the Peptidase M12A domain. Asn-176 carries an N-linked (GlcNAc...) asparagine glycan. 5 cysteine pairs are disulfide-bonded: Cys-179-Cys-337, Cys-201-Cys-223, Cys-203-Cys-204, Cys-340-Cys-390, and Cys-417-Cys-439. Residue His-231 coordinates Zn(2+). Residue Glu-232 is part of the active site. 2 residues coordinate Zn(2+): His-235 and His-241. 2 short sequence motifs (cell attachment site) span residues 245–247 (RGD) and 325–327 (RGD). CUB domains lie at 340 to 477 (CGRT…FEVV) and 478 to 591 (CGGD…LMLD). A glycan (N-linked (GlcNAc...) asparagine) is linked at Asn-441. Disulfide bonds link Cys-478/Cys-505, Cys-532/Cys-554, Cys-595/Cys-606, Cys-602/Cys-615, Cys-617/Cys-630, and Cys-634/Cys-662. Asn-543 carries N-linked (GlcNAc...) asparagine glycosylation. The EGF-like 1; calcium-binding domain occupies 591 to 631 (DVDECKFTDHGCQHLCINTLGSYQCGCRAGYELQANGKTCE). A CUB 3 domain is found at 634 to 753 (CGGVVDATKS…SGFVAKFVID (120 aa)). N-linked (GlcNAc...) asparagine glycosylation is found at Asn-644 and Asn-677. Intrachain disulfides connect Cys-693/Cys-716, Cys-757/Cys-768, Cys-764/Cys-777, Cys-779/Cys-792, Cys-797/Cys-823, Cys-850/Cys-872, Cys-910/Cys-940, and Cys-967/Cys-989. The EGF-like 2; calcium-binding domain maps to 753–793 (DVDECSMNNGGCQHRCRNTFGSYQCSCRNGYTLAENGHNCT). N-linked (GlcNAc...) asparagine glycosylation occurs at Asn-791. CUB domains lie at 797–909 (CKFE…FVSE) and 910–1026 (CGGY…FMAV). Residues Asn-864 and Asn-918 are each glycosylated (N-linked (GlcNAc...) asparagine).

The cofactor is Zn(2+).

Functionally, metalloprotease which cleaves TGF-beta family ligands daw, Actbeta and myo in vitro. Cleavage of daw enhances its signaling activity. Cleaves dorsal-ventral patterning protein sog. Processes sog more efficiently than metalloprotease tld which also cleaves sog. Required for normal dorsal development. TLD may interact physically with DPP-C protein. The polypeptide is Dorsal-ventral patterning protein tolloid (tld) (Drosophila melanogaster (Fruit fly)).